Consider the following 306-residue polypeptide: Glutaminase (306 aa).

S64, N115, E159, N166, Y190, Y242, and V260 together coordinate substrate.

The protein belongs to the glutaminase family. As to quaternary structure, homotetramer.

The catalysed reaction is L-glutamine + H2O = L-glutamate + NH4(+). This chain is Glutaminase, found in Vibrio vulnificus (strain YJ016).